The chain runs to 300 residues: Geranylgeranyl pyrophosphate synthase (300 aa).

N-acetylmethionine is present on Met1. Isopentenyl diphosphate contacts are provided by Lys25, Arg28, and His57. Positions 64 and 68 each coordinate Mg(2+). Arg73 is a dimethylallyl diphosphate binding site. Arg74 lines the isopentenyl diphosphate pocket. Dimethylallyl diphosphate-binding residues include Lys151, Thr152, Gln185, Lys202, and Lys212.

Belongs to the FPP/GGPP synthase family. Homohexamer; trimer of homodimers. It depends on Mg(2+) as a cofactor.

Its subcellular location is the cytoplasm. It localises to the perinuclear region. The protein localises to the myofibril. The protein resides in the sarcomere. It is found in the z line. The catalysed reaction is isopentenyl diphosphate + dimethylallyl diphosphate = (2E)-geranyl diphosphate + diphosphate. It catalyses the reaction isopentenyl diphosphate + (2E)-geranyl diphosphate = (2E,6E)-farnesyl diphosphate + diphosphate. The enzyme catalyses isopentenyl diphosphate + (2E,6E)-farnesyl diphosphate = (2E,6E,10E)-geranylgeranyl diphosphate + diphosphate. It participates in isoprenoid biosynthesis; farnesyl diphosphate biosynthesis; farnesyl diphosphate from geranyl diphosphate and isopentenyl diphosphate: step 1/1. Its pathway is isoprenoid biosynthesis; geranyl diphosphate biosynthesis; geranyl diphosphate from dimethylallyl diphosphate and isopentenyl diphosphate: step 1/1. It functions in the pathway isoprenoid biosynthesis; geranylgeranyl diphosphate biosynthesis; geranylgeranyl diphosphate from farnesyl diphosphate and isopentenyl diphosphate: step 1/1. In terms of biological role, catalyzes the trans-addition of the three molecules of IPP onto DMAPP to form geranylgeranyl pyrophosphate, an important precursor of carotenoids and geranylated proteins. This Rattus norvegicus (Rat) protein is Geranylgeranyl pyrophosphate synthase (Ggps1).